Reading from the N-terminus, the 797-residue chain is Homoaconitase, mitochondrial (797 aa).

The transit peptide at 1–47 directs the protein to the mitochondrion; it reads MVARFVPSAMTVLVARRGLAMASTRRGWRGLAVNLKPAAGRQWRQAY. Positions 404, 471, and 474 each coordinate [4Fe-4S] cluster.

Belongs to the aconitase/IPM isomerase family. It depends on [4Fe-4S] cluster as a cofactor.

The protein resides in the mitochondrion. The catalysed reaction is (2R,3S)-homoisocitrate = cis-homoaconitate + H2O. It functions in the pathway amino-acid biosynthesis; L-lysine biosynthesis via AAA pathway; L-alpha-aminoadipate from 2-oxoglutarate: step 3/5. Functionally, catalyzes the reversible hydration of cis-homoaconitate to (2R,3S)-homoisocitrate, a step in the alpha-aminoadipate pathway for lysine biosynthesis. This is Homoaconitase, mitochondrial (LYS4) from Chaetomium globosum (strain ATCC 6205 / CBS 148.51 / DSM 1962 / NBRC 6347 / NRRL 1970) (Soil fungus).